The sequence spans 400 residues: Tryptophan 2,3-dioxygenase (400 aa).

Residues F75–H79 and R146 contribute to the substrate site. H332 contacts heme. A substrate-binding site is contributed by T346.

This sequence belongs to the tryptophan 2,3-dioxygenase family. In terms of assembly, homotetramer. Dimer of dimers. The cofactor is heme.

It catalyses the reaction L-tryptophan + O2 = N-formyl-L-kynurenine. The protein operates within amino-acid degradation; L-tryptophan degradation via kynurenine pathway; L-kynurenine from L-tryptophan: step 1/2. In terms of biological role, heme-dependent dioxygenase that catalyzes the oxidative cleavage of the L-tryptophan (L-Trp) pyrrole ring and converts L-tryptophan to N-formyl-L-kynurenine. Catalyzes the oxidative cleavage of the indole moiety. The sequence is that of Tryptophan 2,3-dioxygenase from Dictyostelium discoideum (Social amoeba).